A 588-amino-acid polypeptide reads, in one-letter code: Transcription factor 7-like 1 (588 aa).

The span at 1–31 shows a compositional bias: gly residues; sequence MPQLGGGGGGGGGGSGGGGGSSAGAAGGGDD. The CTNNB1-binding stretch occupies residues 1-74; the sequence is MPQLGGGGGG…VKSSLVNESE (74 aa). Disordered stretches follow at residues 1 to 101, 203 to 234, and 409 to 506; these read MPQL…PRDY, SPGS…SPYY, and LYPT…LSLT. Over residues 67–81 the composition is skewed to low complexity; it reads SSLVNESENQSSSSD. Over residues 83–101 the composition is skewed to basic and acidic residues; the sequence is EAERRPQPVRDTFQKPRDY. Positions 346 to 414 form a DNA-binding region, HMG box; the sequence is VKKPLNAFML…LHSQLYPTWS (69 aa). A Nuclear localization signal motif is present at residues 421–427; the sequence is KKKKRKR. Low complexity-rich tracts occupy residues 431 to 441 and 478 to 497; these read LSQTQSQQQVQ and SPAT…ATHS.

The protein belongs to the TCF/LEF family. Binds the armadillo repeat of CTNNB1 and forms a stable complex. Interacts with DAZAP2. Detected in hair follicles and skin keratinocytes, and at lower levels in stomach epithelium.

The protein localises to the nucleus. Its function is as follows. Participates in the Wnt signaling pathway. Binds to DNA and acts as a repressor in the absence of CTNNB1, and as an activator in its presence. Necessary for the terminal differentiation of epidermal cells, the formation of keratohyalin granules and the development of the barrier function of the epidermis. Down-regulates NQO1, leading to increased mitomycin c resistance. This chain is Transcription factor 7-like 1 (TCF7L1), found in Homo sapiens (Human).